Reading from the N-terminus, the 430-residue chain is Toxin coregulated pilus biosynthesis protein B (430 aa).

A compositionally biased stretch (polar residues) spans 351–366 (NFSSESAKDSQGTTQK). Residues 351–371 (NFSSESAKDSQGTTQKDGSKG) form a disordered region.

Its function is as follows. Involved in TCP pilus biogenesis. The sequence is that of Toxin coregulated pilus biosynthesis protein B (tcpB) from Vibrio cholerae serotype O1 (strain ATCC 39315 / El Tor Inaba N16961).